The primary structure comprises 125 residues: NADPH-dependent 7-cyano-7-deazaguanine reductase (125 aa).

The Thioimide intermediate role is filled by Cys40. Asp47 serves as the catalytic Proton donor. Substrate is bound by residues Leu62–Thr64 and His81–Glu82.

It belongs to the GTP cyclohydrolase I family. QueF type 1 subfamily.

The protein localises to the cytoplasm. The enzyme catalyses 7-aminomethyl-7-carbaguanine + 2 NADP(+) = 7-cyano-7-deazaguanine + 2 NADPH + 3 H(+). It participates in tRNA modification; tRNA-queuosine biosynthesis. Catalyzes the NADPH-dependent reduction of 7-cyano-7-deazaguanine (preQ0) to 7-aminomethyl-7-deazaguanine (preQ1). The protein is NADPH-dependent 7-cyano-7-deazaguanine reductase of Frankia casuarinae (strain DSM 45818 / CECT 9043 / HFP020203 / CcI3).